Here is a 356-residue protein sequence, read N- to C-terminus: tRNA N6-adenosine threonylcarbamoyltransferase (356 aa).

His110 and His114 together coordinate Fe cation. Substrate is bound by residues 132 to 136, Asp165, Gly178, Asp182, and Asn288; that span reads LVSGG. Asp316 serves as a coordination point for Fe cation.

This sequence belongs to the KAE1 / TsaD family. The cofactor is Fe(2+).

The protein resides in the cytoplasm. The catalysed reaction is L-threonylcarbamoyladenylate + adenosine(37) in tRNA = N(6)-L-threonylcarbamoyladenosine(37) in tRNA + AMP + H(+). Its function is as follows. Required for the formation of a threonylcarbamoyl group on adenosine at position 37 (t(6)A37) in tRNAs that read codons beginning with adenine. Is involved in the transfer of the threonylcarbamoyl moiety of threonylcarbamoyl-AMP (TC-AMP) to the N6 group of A37, together with TsaE and TsaB. TsaD likely plays a direct catalytic role in this reaction. This chain is tRNA N6-adenosine threonylcarbamoyltransferase, found in Maridesulfovibrio salexigens (strain ATCC 14822 / DSM 2638 / NCIMB 8403 / VKM B-1763) (Desulfovibrio salexigens).